A 254-amino-acid chain; its full sequence is Putative cysteine-rich repeat secretory protein 37 (254 aa).

Positions 1–29 (MYSSYSLSKRLVSIPILAIQLLLIRSVSS) are cleaved as a signal peptide. Gnk2-homologous domains follow at residues 36–138 (YLNH…SIRS) and 145–251 (YRNV…LYPF).

It belongs to the cysteine-rich repeat secretory protein family.

Its subcellular location is the secreted. This Arabidopsis thaliana (Mouse-ear cress) protein is Putative cysteine-rich repeat secretory protein 37 (CRRSP37).